The primary structure comprises 185 residues: GTP-binding protein rhb1 (185 aa).

Residues S16, G18, K19, S20, S21, V32, Y35, T38, N119, D122, and A150 each contribute to the GTP site. S20 lines the Mg(2+) pocket. The Effector region signature appears at 35 to 43 (YYPTIENTF). Residue T38 coordinates Mg(2+). Residue C182 is modified to Cysteine methyl ester. The S-farnesyl cysteine moiety is linked to residue C182. The propeptide at 183–185 (VIA) is removed in mature form.

Belongs to the small GTPase superfamily. Rheb family.

The protein localises to the cell membrane. It catalyses the reaction GTP + H2O = GDP + phosphate + H(+). Functionally, binds GTP and exhibits intrinsic GTPase activity. Regulates entry into stationary phase when extracellular nitrogen levels are adequate for growth. This is GTP-binding protein rhb1 (rhb1) from Schizosaccharomyces pombe (strain 972 / ATCC 24843) (Fission yeast).